A 472-amino-acid polypeptide reads, in one-letter code: Siroheme synthase (472 aa).

The precorrin-2 dehydrogenase /sirohydrochlorin ferrochelatase stretch occupies residues 1–203 (MNYLPIFIDI…GKIQEAKADL (203 aa)). Residues 22-23 (DI) and 43-44 (KS) contribute to the NAD(+) site. Phosphoserine is present on Ser128. The uroporphyrinogen-III C-methyltransferase stretch occupies residues 216 to 472 (GEVYLVGGGP…SSKKSYLFGG (257 aa)). Pro225 is an S-adenosyl-L-methionine binding site. Asp248 functions as the Proton acceptor in the catalytic mechanism. The Proton donor role is filled by Lys270. S-adenosyl-L-methionine is bound by residues 301–303 (GGD), Ile306, 331–332 (TA), Met383, and Gly412.

The protein in the N-terminal section; belongs to the precorrin-2 dehydrogenase / sirohydrochlorin ferrochelatase family. It in the C-terminal section; belongs to the precorrin methyltransferase family.

It carries out the reaction uroporphyrinogen III + 2 S-adenosyl-L-methionine = precorrin-2 + 2 S-adenosyl-L-homocysteine + H(+). It catalyses the reaction precorrin-2 + NAD(+) = sirohydrochlorin + NADH + 2 H(+). The enzyme catalyses siroheme + 2 H(+) = sirohydrochlorin + Fe(2+). The protein operates within cofactor biosynthesis; adenosylcobalamin biosynthesis; precorrin-2 from uroporphyrinogen III: step 1/1. It functions in the pathway cofactor biosynthesis; adenosylcobalamin biosynthesis; sirohydrochlorin from precorrin-2: step 1/1. Its pathway is porphyrin-containing compound metabolism; siroheme biosynthesis; precorrin-2 from uroporphyrinogen III: step 1/1. It participates in porphyrin-containing compound metabolism; siroheme biosynthesis; siroheme from sirohydrochlorin: step 1/1. The protein operates within porphyrin-containing compound metabolism; siroheme biosynthesis; sirohydrochlorin from precorrin-2: step 1/1. Functionally, multifunctional enzyme that catalyzes the SAM-dependent methylations of uroporphyrinogen III at position C-2 and C-7 to form precorrin-2 via precorrin-1. Then it catalyzes the NAD-dependent ring dehydrogenation of precorrin-2 to yield sirohydrochlorin. Finally, it catalyzes the ferrochelation of sirohydrochlorin to yield siroheme. This Ruthia magnifica subsp. Calyptogena magnifica protein is Siroheme synthase.